A 118-amino-acid polypeptide reads, in one-letter code: Holin-like protein CidA 2 (118 aa).

The next 4 helical transmembrane spans lie at 5 to 27 (MLLL…QGVF), 31 to 50 (MPGS…TRIL), 62 to 84 (LLVF…ESFL), and 88 to 110 (GSII…GYIS).

The protein belongs to the CidA/LrgA family. CidA subfamily.

The protein localises to the cell membrane. In terms of biological role, increases the activity of extracellular murein hydrolases possibly by mediating their export via hole formation. Inhibited by the antiholin-like proteins LrgAB. In an unstressed cell, the LrgAB products probably inhibit the function of the CidA protein. When a cell is stressed by the addition of antibiotics or by other factors in the environment, CidA possibly oligomerizes within the bacterial cell membrane, creating lesions that disrupt the proton motive force, which in turn results in loss of cell viability. These lesions are also hypothesized to regulate the subsequent cell lysis by either allowing the murein hydrolases access to the cell wall substrate and/or regulating their activity by a possible change in the cell wall pH that results from loss of membrane potential. The protein is Holin-like protein CidA 2 (cidA2) of Bacillus anthracis.